A 228-amino-acid chain; its full sequence is Large ribosomal subunit protein uL1 (228 aa).

The protein belongs to the universal ribosomal protein uL1 family. Part of the 50S ribosomal subunit.

In terms of biological role, binds directly to 23S rRNA. The L1 stalk is quite mobile in the ribosome, and is involved in E site tRNA release. Protein L1 is also a translational repressor protein, it controls the translation of the L11 operon by binding to its mRNA. The protein is Large ribosomal subunit protein uL1 of Clavibacter michiganensis subsp. michiganensis (strain NCPPB 382).